The chain runs to 142 residues: Hemoglobin subunit alpha (142 aa).

The region spanning 2–142 (HLTADDKKHI…VSNVLTSKYR (141 aa)) is the Globin domain. Heme b-binding residues include H59 and H88.

This sequence belongs to the globin family. Heterotetramer of two alpha chains and two beta chains. Red blood cells.

Involved in oxygen transport from the lung to the various peripheral tissues. This chain is Hemoglobin subunit alpha (hba-A), found in Xenopus tropicalis (Western clawed frog).